Reading from the N-terminus, the 164-residue chain is CB1 cannabinoid receptor-interacting protein 1 (164 aa).

This sequence belongs to the CNRIP family. In terms of assembly, interacts with the cannabinoid receptor CNR1 (via C-terminus). Does not interact with cannabinoid receptor CNR2.

Functionally, suppresses cannabinoid receptor CNR1-mediated tonic inhibition of voltage-gated calcium channels. This Bos taurus (Bovine) protein is CB1 cannabinoid receptor-interacting protein 1 (CNRIP1).